Reading from the N-terminus, the 453-residue chain is Na(+)/H(+) antiporter NhaA (453 aa).

11 consecutive transmembrane segments (helical) span residues 27–47, 78–98, 114–134, 143–163, 172–192, 201–221, 222–242, 316–336, 346–366, 385–405, and 421–441; these read FLHI…SALI, LHFW…GMEI, ILPI…YFIF, GWAV…ALLG, IILL…IAFF, GLLI…IGLA, SAWL…VTGV, PWVA…VSFA, FLIV…GIIT, WAGI…SIFV, and IGVL…GFIY.

The protein belongs to the NhaA Na(+)/H(+) (TC 2.A.33) antiporter family.

The protein resides in the cell inner membrane. The enzyme catalyses Na(+)(in) + 2 H(+)(out) = Na(+)(out) + 2 H(+)(in). Na(+)/H(+) antiporter that extrudes sodium in exchange for external protons. This Bartonella tribocorum (strain CIP 105476 / IBS 506) protein is Na(+)/H(+) antiporter NhaA.